Here is a 284-residue protein sequence, read N- to C-terminus: uncharacterized protein (284 aa).

The Cytoplasmic portion of the chain corresponds to 1 to 8 (MLWKVSKM). The helical transmembrane segment at 9 to 25 (FLGGLVALTTISVATLY) threads the bilayer. The Extracellular segment spans residues 26 to 80 (HYQNRLVYPSWAQGARNHVDTPDSRGIPYEKLTLITQDHIKLEAWDIKNENSTST). A helical membrane pass occupies residues 81–101 (VLILCPNAGNIGYFILIIDIF). Residues 102–284 (YRQFGMSVFI…RDFLIEKGFI (183 aa)) lie on the Cytoplasmic side of the membrane.

To S.pombe bem46 and M.tuberculosis Rv2307c.

It is found in the mitochondrion membrane. This is an uncharacterized protein from Saccharomyces cerevisiae (strain ATCC 204508 / S288c) (Baker's yeast).